Reading from the N-terminus, the 438-residue chain is Thymidine phosphorylase (438 aa).

It belongs to the thymidine/pyrimidine-nucleoside phosphorylase family. In terms of assembly, homodimer.

The enzyme catalyses thymidine + phosphate = 2-deoxy-alpha-D-ribose 1-phosphate + thymine. It functions in the pathway pyrimidine metabolism; dTMP biosynthesis via salvage pathway; dTMP from thymine: step 1/2. Functionally, the enzymes which catalyze the reversible phosphorolysis of pyrimidine nucleosides are involved in the degradation of these compounds and in their utilization as carbon and energy sources, or in the rescue of pyrimidine bases for nucleotide synthesis. This is Thymidine phosphorylase from Burkholderia orbicola (strain MC0-3).